A 375-amino-acid chain; its full sequence is Growth/differentiation factor 8 (375 aa).

The signal sequence occupies residues Met1–Ala18. Positions Gly19 to Arg266 are excised as a propeptide. Residues Asn47 and Asn71 are each glycosylated (N-linked (GlcNAc...) asparagine). Disulfide bonds link Cys272–Cys282, Cys281–Cys340, Cys309–Cys372, and Cys313–Cys374.

This sequence belongs to the TGF-beta family. Homodimer; disulfide-linked. Interacts with WFIKKN2, leading to inhibit its activity. Interacts with FSTL3. Post-translationally, synthesized as large precursor molecule that undergoes proteolytic cleavage to generate an N-terminal propeptide and a disulfide linked C-terminal dimer, which is the biologically active molecule. The circulating form consists of a latent complex of the C-terminal dimer and other proteins, including its propeptide, which maintain the C-terminal dimer in a latent, inactive state. Ligand activation requires additional cleavage of the prodomain by a tolloid-like metalloproteinase.

It is found in the secreted. Its function is as follows. Acts specifically as a negative regulator of skeletal muscle growth. The polypeptide is Growth/differentiation factor 8 (MSTN) (Bubalus bubalis (Domestic water buffalo)).